The primary structure comprises 559 residues: Dihydroxy-acid dehydratase (559 aa).

Residue Cys49 participates in [2Fe-2S] cluster binding. Mg(2+) is bound at residue Asp81. Position 122 (Cys122) interacts with [2Fe-2S] cluster. Positions 123 and 124 each coordinate Mg(2+). Residue Lys124 is modified to N6-carboxylysine. Cys194 contributes to the [2Fe-2S] cluster binding site. Position 446 (Glu446) interacts with Mg(2+). The active-site Proton acceptor is Ser472.

It belongs to the IlvD/Edd family. In terms of assembly, homodimer. Requires [2Fe-2S] cluster as cofactor. It depends on Mg(2+) as a cofactor.

The catalysed reaction is (2R)-2,3-dihydroxy-3-methylbutanoate = 3-methyl-2-oxobutanoate + H2O. It catalyses the reaction (2R,3R)-2,3-dihydroxy-3-methylpentanoate = (S)-3-methyl-2-oxopentanoate + H2O. Its pathway is amino-acid biosynthesis; L-isoleucine biosynthesis; L-isoleucine from 2-oxobutanoate: step 3/4. The protein operates within amino-acid biosynthesis; L-valine biosynthesis; L-valine from pyruvate: step 3/4. In terms of biological role, functions in the biosynthesis of branched-chain amino acids. Catalyzes the dehydration of (2R,3R)-2,3-dihydroxy-3-methylpentanoate (2,3-dihydroxy-3-methylvalerate) into 2-oxo-3-methylpentanoate (2-oxo-3-methylvalerate) and of (2R)-2,3-dihydroxy-3-methylbutanoate (2,3-dihydroxyisovalerate) into 2-oxo-3-methylbutanoate (2-oxoisovalerate), the penultimate precursor to L-isoleucine and L-valine, respectively. This chain is Dihydroxy-acid dehydratase, found in Prochlorococcus marinus (strain MIT 9515).